We begin with the raw amino-acid sequence, 449 residues long: Cytochrome P450 monooxygenase iliC (449 aa).

The helical transmembrane segment at 28 to 44 threads the bilayer; it reads TFAITFMGVKQICTIEG. Position 397 (C397) interacts with heme.

This sequence belongs to the cytochrome P450 family. Requires heme as cofactor.

The protein resides in the membrane. The catalysed reaction is (3E,5S)-3-[(2E,4E,8S,10E,12Z)-1-hydroxy-4,8-dimethyltetradeca-2,4,10,12-tetraen-1-ylidene]-5-[(4-hydroxyphenyl)methyl]pyrrolidine-2,4-dione + reduced [NADPH--hemoprotein reductase] + O2 = 3-[(2E,4E,8S,10E,12Z)-4,8-dimethyltetradeca-2,4,10,12-tetraenoyl]-4-hydroxy-5-(4-hydroxyphenyl)-1,2-dihydropyridin-2-one + oxidized [NADPH--hemoprotein reductase] + 2 H2O. Its pathway is mycotoxin biosynthesis. Cytochrome P450 monooxygenase; part of the gene cluster that mediates the biosynthesis of ilicicolin H, a 4-hydroxy-2-pyridonealkaloid that has potent and broad antifungal activities by inhibiting the mitochondrial respiration chain. IliC catalyzes the ring expansion of the tetramate intermediate to the acyclic 2-pyridone intermediate that contains the trans bis-diene chain. The biosynthesis of ilicicolin H starts with formation of the tetramic acid by the hybrid PKS-NRPS synthetase iliA with the partnering trans-enoyl reductase iliB since iliA lacks a designated enoylreductase (ER) domain. The cytochrome P450 monooxygenase iliC then catalyzes the ring expansion of the tetramate to the acyclic 2-pyridone. The pericyclase iliD further converts the acyclic 2-pyridone into 8-epi-ilicicolin H. 8-epi-ilicicolin H might then spontaneously convert to ilicicolin H since ilicicolin H is produced in the absence of the epimerase iliE, in contrast to what was observed for the Talaromyces variabilis ilicolin H biosynthetic pathway. The sequence is that of Cytochrome P450 monooxygenase iliC from Hypocrea jecorina (strain QM6a) (Trichoderma reesei).